We begin with the raw amino-acid sequence, 188 residues long: Protein TIFY 9 (188 aa).

The segment at 20–41 (DADDRHAKSGGSSASSSSSIRG) is disordered. Residues 28–38 (SGGSSASSSSS) show a composition bias toward low complexity. The Tify domain maps to 80-114 (AAAAAAPMTLFYNGSVAVFDVSHDKAEAIMRMATE). The Jas signature appears at 135–160 (PLTRTKSLQRFLSKRKERLTSLGPYQ). A disordered region spans residues 156 to 188 (LGPYQVGGPAAVGATTSTTTKSFLAKEEEHTAS). Basic and acidic residues predominate over residues 179–188 (LAKEEEHTAS).

The protein belongs to the TIFY/JAZ family. In terms of processing, ubiquitinated. Targeted for degradation by the SCF(COI1) E3 ubiquitin ligase-proteasome pathway during jasmonate signaling.

Its function is as follows. Repressor of jasmonate responses. The chain is Protein TIFY 9 from Oryza sativa subsp. indica (Rice).